Consider the following 310-residue polypeptide: MTQDVRRSKLEFNKLQKRLRRNVGKAIADYNMIEDGDKVMVCLSGGKDSYAMLDILMGLQKAAPIKFDIVAVNMDQKQPGFPEHILPEYLDSLGIEYHIVERDTYSVVKSVIPEGKTTCGLCSRLRRGTLYGFAERIGATKIALGHHRDDIVETLFLNMFYGGRLKAMPPKLLADDKRNIIIRPLAYCVEADLEEFAKQKAFPIIPCNLCGSQENLQRQAIKQMLQGWEKQFPGRIETIFSSLQRVSASQLADTELYDFVGLTIDRSAEPKDYGEQSAINVFPPLDDSFAGNSLKGEQDPVKLIEAVNLG.

The PP-loop motif motif lies at 44–49 (SGGKDS). Residues cysteine 119, cysteine 122, and cysteine 210 each contribute to the [4Fe-4S] cluster site.

This sequence belongs to the TtcA family. Homodimer. The cofactor is Mg(2+). [4Fe-4S] cluster is required as a cofactor.

It is found in the cytoplasm. It catalyses the reaction cytidine(32) in tRNA + S-sulfanyl-L-cysteinyl-[cysteine desulfurase] + AH2 + ATP = 2-thiocytidine(32) in tRNA + L-cysteinyl-[cysteine desulfurase] + A + AMP + diphosphate + H(+). It functions in the pathway tRNA modification. In terms of biological role, catalyzes the ATP-dependent 2-thiolation of cytidine in position 32 of tRNA, to form 2-thiocytidine (s(2)C32). The sulfur atoms are provided by the cysteine/cysteine desulfurase (IscS) system. This is tRNA-cytidine(32) 2-sulfurtransferase from Saccharophagus degradans (strain 2-40 / ATCC 43961 / DSM 17024).